The following is a 213-amino-acid chain: MTDQSHQCVIIGIAGASASGKSLIASTLYRELREQVGDEHIGVIPEDSYYKDQSHLSMEERVKTNYDHPNAMDHSLLFQHLQALKRGSAIELPVYSYVEHTRMQETVRVEPKKVIILEGILLLTDARLREEMNFSIFVDTPLDICLMRRIKRDVNERGRSMDSVMAQYQKTVRPMFLQFIEPSKQYADIIVPRGGKNRIAIDILKAKISQFFE.

Gly-15–Ser-22 is an ATP binding site.

The protein belongs to the uridine kinase family.

The protein resides in the cytoplasm. The catalysed reaction is uridine + ATP = UMP + ADP + H(+). It catalyses the reaction cytidine + ATP = CMP + ADP + H(+). The protein operates within pyrimidine metabolism; CTP biosynthesis via salvage pathway; CTP from cytidine: step 1/3. It participates in pyrimidine metabolism; UMP biosynthesis via salvage pathway; UMP from uridine: step 1/1. In Salmonella agona (strain SL483), this protein is Uridine kinase.